Here is a 463-residue protein sequence, read N- to C-terminus: Quinolone resistance protein NorB (463 aa).

A run of 14 helical transmembrane segments spans residues 17–37 (IGIV…VNVV), 53–73 (IAVS…GGLA), 86–106 (IILN…LLLI), 107–127 (IGRL…LSII), 142–162 (YWSI…GAVA), 165–185 (LGWR…LFLI), 201–221 (FDIK…ILIT), 230–250 (SLLF…FIVL), 273–293 (TASN…NTFV), 299–319 (YSSL…LIMI), 334–354 (PMLI…LTFL), 357–377 (ILYV…LGIY), 403–423 (MASA…YAIV), and 435–455 (IALW…LLLV).

The protein belongs to the major facilitator superfamily. TCR/Tet family.

The protein localises to the cell membrane. In terms of biological role, multidrug efflux pump that acts independently of NorA and is one of the factors that confers resistance against diverse quinolones and chemical compounds. Can facilitate bacterial survival in vivo when overexpressed in an abscess and may contribute to the relative resistance of staphylococcal abscesses to antimicrobial therapy. This is Quinolone resistance protein NorB (norB) from Staphylococcus aureus (strain MW2).